Here is a 179-residue protein sequence, read N- to C-terminus: MKQFLDFLPLVVFFAFYKLYDIYAATSALIVATAIVLIYSWVRYRKIEKMALITFVLVAVFGGLTLFFHNDEFIKWKVTVIYALFAGALLMSQWVMKKPLIQRMLGKELALPQQIWSKLNLAWALFFIVCGLANIYIAFWLPQNIWVNFKVFGLTALTLIFTLLSGVYIYRHLPQEDKS.

The next 5 membrane-spanning stretches (helical) occupy residues 22-42 (IYAA…YSWV), 50-70 (MALI…FFHN), 76-96 (WKVT…QWVM), 121-141 (LAWA…AFWL), and 149-169 (FKVF…GVYI).

Belongs to the YciB family.

The protein resides in the cell inner membrane. Functionally, plays a role in cell envelope biogenesis, maintenance of cell envelope integrity and membrane homeostasis. The polypeptide is Inner membrane-spanning protein YciB (Salmonella arizonae (strain ATCC BAA-731 / CDC346-86 / RSK2980)).